The following is a 117-amino-acid chain: Large ribosomal subunit protein bL20c (117 aa).

Belongs to the bacterial ribosomal protein bL20 family.

Its subcellular location is the plastid. It is found in the chloroplast. Its function is as follows. Binds directly to 23S ribosomal RNA and is necessary for the in vitro assembly process of the 50S ribosomal subunit. It is not involved in the protein synthesizing functions of that subunit. The sequence is that of Large ribosomal subunit protein bL20c from Morus indica (Mulberry).